Here is a 79-residue protein sequence, read N- to C-terminus: Large ribosomal subunit protein bL31 (79 aa).

Belongs to the bacterial ribosomal protein bL31 family. Type A subfamily. As to quaternary structure, part of the 50S ribosomal subunit.

Binds the 23S rRNA. This Rickettsia bellii (strain RML369-C) protein is Large ribosomal subunit protein bL31 (rpmE).